Here is a 240-residue protein sequence, read N- to C-terminus: Bidirectional sugar transporter SWEET7c (240 aa).

The Extracellular segment spans residues 1–12 (MVSPDLIRNVVG). One can recognise a MtN3/slv 1 domain in the interval 10–48 (VVGIVGNVISFGLFLSPVPIFWWIIKNKNVQNFKADPIL). A helical transmembrane segment spans residues 13–33 (IVGNVISFGLFLSPVPIFWWI). Over 34 to 46 (IKNKNVQNFKADP) the chain is Cytoplasmic. The chain crosses the membrane as a helical span at residues 47–67 (ILVVTINGISLVIEAVYLTIF). At 68-78 (FLFSDKKNKKK) the chain is on the extracellular side. Residues 79 to 99 (MGVVLATEALFMAAVAVGVLL) form a helical membrane-spanning segment. Over 100 to 108 (GAHTHQRRS) the chain is Cytoplasmic. A helical transmembrane segment spans residues 109 to 129 (LIVGILCVIFGTIMYSSPLTI). In terms of domain architecture, MtN3/slv 2 spans 110–191 (IVGILCVIFG…LILYAIYYRT (82 aa)). Over 130–140 (MVVKTKSVEYM) the chain is Extracellular. The chain crosses the membrane as a helical span at residues 141 to 161 (PLLLSVVSFLNGLCWTLYALI). Residues 162–164 (RFD) are Cytoplasmic-facing. The chain crosses the membrane as a helical span at residues 165–185 (IFITIPNGLGVLFAIMQLILY). At 186–240 (AIYYRTTPKKQDKNLELPTVAPIAKDTSIVAPVGNDDDVNGSTASHATINITIEP) the chain is on the extracellular side. N-linked (GlcNAc...) asparagine glycans are attached at residues Asn225 and Asn235.

It belongs to the SWEET sugar transporter family. In terms of assembly, forms homooligomers and/or heterooligomers.

It localises to the cell membrane. Its function is as follows. Mediates both low-affinity uptake and efflux of sugar across the plasma membrane. This chain is Bidirectional sugar transporter SWEET7c (SWEET7C), found in Oryza sativa subsp. indica (Rice).